The primary structure comprises 328 residues: Transcription factor bHLH25 (328 aa).

The interval 125-152 (PHQKSDEFNRKGTKRAQPFSRNQSNAQD) is disordered. In terms of domain architecture, bHLH spans 148–197 (SNAQDHIIAERKRREKLTQRFVALSALVPGLKKMDKASVLGDALKHIKYL).

As to quaternary structure, homodimer. In terms of tissue distribution, expressed in flowers.

It localises to the nucleus. This is Transcription factor bHLH25 (BHLH25) from Arabidopsis thaliana (Mouse-ear cress).